Here is a 372-residue protein sequence, read N- to C-terminus: MLKLVENVVGRVSEEENKVPEVQVPQSSIDEELKKIVEQIKARIYVVGVGGAGCNTVNRMMEVGVTGAKIIAVNTDAQDLLKVKAHQKILIGKELTRGLGAGNDPKIGEEAAKESERELRDALEGADMVFITCGLGGGTGTGAAPVIAEIARKMGALTVSVVTLPFTMEGIRRAKNAEYGLKRLVKYSDTVIVIPNDKLLEVAPKLPIQMAFKVADEILVQAVKGITELITKPGLVNLDFNDVRAVMKDGGVAMIGIGESDSEKRALEAAEQALNSPLLDVDISGATGALIHISGADVKLEEAQQIIEYVTRNVDPKAQVIWGIQLEPELEKTIRVMVVITGVTSRYITPEEETPLETPEESPSIEISIPEL.

Residues 51-55 (GAGCN), 138-140 (GTG), Glu169, Arg173, and Asp216 contribute to the GTP site. Residues 350 to 360 (PEEETPLETPE) show a composition bias toward acidic residues. The segment at 350-372 (PEEETPLETPEESPSIEISIPEL) is disordered. The span at 361–372 (ESPSIEISIPEL) shows a compositional bias: low complexity.

It belongs to the FtsZ family. As to quaternary structure, homodimer. Polymerizes to form a dynamic ring structure in a strictly GTP-dependent manner. Interacts directly with several other division proteins.

Its subcellular location is the cytoplasm. In terms of biological role, essential cell division protein that forms a contractile ring structure (Z ring) at the future cell division site. The regulation of the ring assembly controls the timing and the location of cell division. One of the functions of the FtsZ ring is to recruit other cell division proteins to the septum to produce a new cell wall between the dividing cells. Binds GTP and shows GTPase activity. This Pyrococcus furiosus (strain ATCC 43587 / DSM 3638 / JCM 8422 / Vc1) protein is Cell division protein FtsZ 1.